Consider the following 486-residue polypeptide: UDP-N-acetylmuramate--L-alanine ligase (486 aa).

129–135 (GTHGKTT) is an ATP binding site.

This sequence belongs to the MurCDEF family.

The protein resides in the cytoplasm. The catalysed reaction is UDP-N-acetyl-alpha-D-muramate + L-alanine + ATP = UDP-N-acetyl-alpha-D-muramoyl-L-alanine + ADP + phosphate + H(+). It participates in cell wall biogenesis; peptidoglycan biosynthesis. Cell wall formation. The chain is UDP-N-acetylmuramate--L-alanine ligase from Vibrio vulnificus (strain YJ016).